Consider the following 105-residue polypeptide: Endoribonuclease MazF1 (105 aa).

The protein belongs to the PemK/MazF family. Forms a complex with cognate antitoxin MazE1.

Its function is as follows. Toxic component of a type II toxin-antitoxin (TA) system. Acts as an endoribonuclease on single-strand RNA, cleaving between the first and second bases in the sequence UCGCU. Neutralized by coexpression with cognate antitoxin MazE1. The protein is Endoribonuclease MazF1 (mazF1) of Mycobacterium bovis (strain ATCC BAA-935 / AF2122/97).